A 482-amino-acid chain; its full sequence is MPRFVDRVVIHAKAGTGGHGCASVHREKFKPLGGPDGGNGGRGGSVILEVDPQVHTLLDFHFHPHLQAPNGTQGMGGHRNGANGDDLILKVPDGTVVLDDDGRILADLVGAGARFDAAAGGRGGLGNAALASRARKAPGFALLGEAGAEVDLTLELKTVADVGLVGFPSAGKSSLVSVLSAAKPKIADYPFTTLVPNLGVVTTGENSFVMADVPGLIPGAAEGRGLGLEFLRHIERCAVLVHVVDCATLEPGRDPVSDIDALENELARYQPTLQDDSVLGDLADRPRAVVLNKVDVPEADELADFVTEEVSQRGWPVFKVSTLTRDGLRPLTFALWEMIVAARAARPEPVKTRPVIRPIPVDESGFTVSADPQNPGGFVVRGVRPERWIRQTNFENDEAVGYLGDRLARLGVEDELLKLGAEPGCAVTIGDMTFDWEPQTPAGVDVTMSGRGTDARIDKTDRVGAAERRQARRVRRGQVEPE.

Positions 2-159 (PRFVDRVVIH…VDLTLELKTV (158 aa)) constitute an Obg domain. An OBG-type G domain is found at 160 to 340 (ADVGLVGFPS…LTFALWEMIV (181 aa)). Residues 166–173 (GFPSAGKS), 191–195 (FTTLV), 212–215 (DVPG), 292–295 (NKVD), and 321–323 (STL) contribute to the GTP site. Mg(2+)-binding residues include S173 and T193. The OCT domain occupies 358-438 (PIPVDESGFT…IGDMTFDWEP (81 aa)). The disordered stretch occupies residues 441–482 (PAGVDVTMSGRGTDARIDKTDRVGAAERRQARRVRRGQVEPE). Residues 453–469 (TDARIDKTDRVGAAERR) show a composition bias toward basic and acidic residues.

This sequence belongs to the TRAFAC class OBG-HflX-like GTPase superfamily. OBG GTPase family. In terms of assembly, monomer. The cofactor is Mg(2+).

It localises to the cytoplasm. In terms of biological role, an essential GTPase which binds GTP, GDP and possibly (p)ppGpp with moderate affinity, with high nucleotide exchange rates and a fairly low GTP hydrolysis rate. Plays a role in control of the cell cycle, stress response, ribosome biogenesis and in those bacteria that undergo differentiation, in morphogenesis control. In Mycobacteroides abscessus (strain ATCC 19977 / DSM 44196 / CCUG 20993 / CIP 104536 / JCM 13569 / NCTC 13031 / TMC 1543 / L948) (Mycobacterium abscessus), this protein is GTPase Obg.